The following is a 249-amino-acid chain: Tetrahydromethanopterin S-methyltransferase subunit A (249 aa).

At 2-225 the chain is on the cytoplasmic side; the sequence is PEKAEPAEGW…YMAGYLSGRT (224 aa). His-88 contributes to the 5-hydroxybenzimidazolylcob(I)amide binding site. The helical transmembrane segment at 226–246 threads the bilayer; sequence MGLLIGIISGMIFLFLPMVVL. At 247–249 the chain is on the extracellular side; sequence GGV.

The protein belongs to the MtrA family. In terms of assembly, the complex is composed of 8 subunits; MtrA, MtrB, MtrC, MtrD, MtrE, MtrF, MtrG and MtrH. Requires 5-hydroxybenzimidazolylcob(I)amide as cofactor.

Its subcellular location is the cell membrane. The enzyme catalyses 5-methyl-5,6,7,8-tetrahydromethanopterin + coenzyme M + 2 Na(+)(in) = 5,6,7,8-tetrahydromethanopterin + methyl-coenzyme M + 2 Na(+)(out). The protein operates within one-carbon metabolism; methanogenesis from CO(2); methyl-coenzyme M from 5,10-methylene-5,6,7,8-tetrahydromethanopterin: step 2/2. Functionally, part of a complex that catalyzes the formation of methyl-coenzyme M and tetrahydromethanopterin from coenzyme M and methyl-tetrahydromethanopterin. This is an energy-conserving, sodium-ion translocating step. The sequence is that of Tetrahydromethanopterin S-methyltransferase subunit A from Methanopyrus kandleri (strain AV19 / DSM 6324 / JCM 9639 / NBRC 100938).